A 384-amino-acid chain; its full sequence is PqqA peptide cyclase (384 aa).

One can recognise a Radical SAM core domain in the interval 5–220 (VGLPLWLLAE…TNEYREKLKA (216 aa)). [4Fe-4S] cluster is bound by residues cysteine 19, cysteine 23, and cysteine 26.

It belongs to the radical SAM superfamily. PqqE family. In terms of assembly, interacts with PqqD. The interaction is necessary for activity of PqqE. The cofactor is [4Fe-4S] cluster.

The enzyme catalyses [PQQ precursor protein] + S-adenosyl-L-methionine = E-Y cross-linked-[PQQ precursor protein] + 5'-deoxyadenosine + L-methionine + H(+). Its pathway is cofactor biosynthesis; pyrroloquinoline quinone biosynthesis. Functionally, catalyzes the cross-linking of a glutamate residue and a tyrosine residue in the PqqA protein as part of the biosynthesis of pyrroloquinoline quinone (PQQ). This chain is PqqA peptide cyclase, found in Acinetobacter baumannii (strain ACICU).